Consider the following 713-residue polypeptide: Calpain-1 catalytic subunit (713 aa).

In terms of domain architecture, Calpain catalytic spans leucine 55–threonine 354. Catalysis depends on residues cysteine 115, histidine 272, and asparagine 296. Threonine 354 is subject to Phosphothreonine. The tract at residues proline 355–aspartate 525 is domain III. The segment at glutamine 526–glutamate 541 is linker. The segment at isoleucine 542–phenylalanine 712 is domain IV. 4 EF-hand domains span residues aspartate 557 to lysine 575, phenylalanine 584 to phenylalanine 609, asparagine 614 to lysine 649, and valine 679 to alanine 713. Ca(2+)-binding residues include aspartate 597, aspartate 599, asparagine 601, lysine 603, glutamate 608, aspartate 627, aspartate 629, serine 631, serine 633, and glutamate 638.

The protein belongs to the peptidase C2 family. As to quaternary structure, forms a heterodimer with a small (regulatory) subunit CAPNS1. It depends on Ca(2+) as a cofactor. Post-translationally, undergoes calcium-induced successive autoproteolytic cleavages that generate a membrane-bound 78 kDa active form and an intracellular 75 kDa active form. Calpastatin reduces with high efficiency the transition from 78 kDa to 75 kDa calpain forms.

Its subcellular location is the cytoplasm. The protein localises to the cell membrane. The enzyme catalyses Broad endopeptidase specificity.. With respect to regulation, activated by micromolar concentrations of calcium and inhibited by calpastatin. Its function is as follows. Calcium-regulated non-lysosomal thiol-protease which catalyzes limited proteolysis of substrates involved in cytoskeletal remodeling and signal transduction. Proteolytically cleaves CTBP1 at 'Asn-364', 'Gly-377' and 'His-399'. Cleaves and activates caspase-7 (CASP7). The sequence is that of Calpain-1 catalytic subunit from Rattus norvegicus (Rat).